Here is a 750-residue protein sequence, read N- to C-terminus: Neprilysin (750 aa).

A compositionally biased stretch (polar residues) spans 1 to 14; the sequence is MGRSESQMDITDIN. Residues 1-20 are disordered; it reads MGRSESQMDITDINTPKPKK. A lipid anchor (N-myristoyl glycine) is attached at G2. At 2 to 28 the chain is on the cytoplasmic side; it reads GRSESQMDITDINTPKPKKKQRWTPLE. 2 positions are modified to phosphoserine: S4 and S6. Residues 16–23 carry the Stop-transfer sequence motif; it reads PKPKKKQR. Residues 29–51 traverse the membrane as a helical; Signal-anchor for type II membrane protein segment; that stretch reads ISLSVLVLLLTVIAVTMIALYAT. Over 52-750 the chain is Extracellular; it reads YDDGICKSSD…MNPEKKCRVW (699 aa). Residues 56 to 750 enclose the Peptidase M13 domain; the sequence is ICKSSDCIKS…MNPEKKCRVW (695 aa). 6 disulfide bridges follow: C57/C62, C80/C735, C88/C695, C143/C411, C234/C242, and C621/C747. Residue R103 participates in a peptide binding. N145 carries an N-linked (GlcNAc...) asparagine glycan. N-linked (GlcNAc...) asparagine glycosylation is found at N285, N311, and N325. Zn(2+) is bound at residue H584. Residue E585 is part of the active site. Residue H588 participates in Zn(2+) binding. N628 is a glycosylation site (N-linked (GlcNAc...) asparagine). E647 is a binding site for Zn(2+). D651 functions as the Proton donor in the catalytic mechanism.

It belongs to the peptidase M13 family. Zn(2+) serves as cofactor. In terms of processing, myristoylation is a determinant of membrane targeting. Glycosylation at Asn-628 is necessary both for surface expression and neutral endopeptidase activity.

The protein localises to the cell membrane. The enzyme catalyses Preferential cleavage of polypeptides between hydrophobic residues, particularly with Phe or Tyr at P1'.. It carries out the reaction substance P + H2O = substance P(1-9) + L-Leu-L-Met-NH2. The catalysed reaction is substance P + H2O = substance P(1-7) + L-Phe-Gly-L-Leu-L-Met-NH2. It catalyses the reaction neurotensin + H2O = neurotensin(1-11) + L-isoleucyl-L-leucine. The enzyme catalyses neurotensin + H2O = neurotensin(1-10) + L-tyrosyl-L-isoleucyl-L-leucine. With respect to regulation, inhibited by mixanpril, an orally-active drug used for the treatment of hypertension. Its function is as follows. Thermolysin-like specificity, but is almost confined on acting on polypeptides of up to 30 amino acids. Biologically important in the destruction of opioid peptides such as Met- and Leu-enkephalins by cleavage of a Gly-Phe bond. Catalyzes cleavage of bradykinin, substance P and neurotensin peptides. Able to cleave angiotensin-1, angiotensin-2 and angiotensin 1-9. Involved in the degradation of atrial natriuretic factor (ANF) and brain natriuretic factor (BNP(1-32)). Displays UV-inducible elastase activity toward skin preelastic and elastic fibers. In Oryctolagus cuniculus (Rabbit), this protein is Neprilysin (MME).